We begin with the raw amino-acid sequence, 1101 residues long: Selenocysteine insertion sequence-binding protein 2-like (1101 aa).

5 disordered regions span residues 154–206 (LGQV…AGPD), 240–295 (LWKS…PDSG), 320–387 (QKKP…SESL), 884–1010 (TSDG…ISVE), and 1030–1101 (TLQL…TQTT). Residues 255–265 (AESSSEQGASE) are compositionally biased toward low complexity. At Ser276 the chain carries Phosphoserine. The span at 327–346 (KNQTFSRGGRQTEQRNNSQV) shows a compositional bias: polar residues. 2 stretches are compositionally biased toward basic and acidic residues: residues 356–371 (SSER…DNKH) and 892–908 (ENEK…EKPS). Over residues 925-939 (ATGSTTSATSAGKST) the composition is skewed to low complexity. Over residues 940–950 (ASDKEEVKPDD) the composition is skewed to basic and acidic residues. The span at 954–964 (ASQQSTETGSL) shows a compositional bias: polar residues. Over residues 988 to 1002 (LEEEEDEDEEEEEDY) the composition is skewed to acidic residues. Residues 1030 to 1039 (TLQLGKTLNG) are compositionally biased toward polar residues. Acidic residues predominate over residues 1040–1057 (SEEDNVEQSGEEEAEAPE). Polar residues predominate over residues 1070-1087 (ADQQASPGQQKSSNCSSL).

Binds SECIS (Sec insertion sequence) elements present on selenocysteine (Sec) protein mRNAs, but does not promote Sec incorporation into selenoproteins in vitro. The chain is Selenocysteine insertion sequence-binding protein 2-like (SECISBP2L) from Homo sapiens (Human).